Here is a 627-residue protein sequence, read N- to C-terminus: Protein CER1-like 1 (627 aa).

The next 5 membrane-spanning stretches (helical) occupy residues 19-39 (FKYL…VTAV), 48-68 (LMIV…ISVS), 126-146 (GAIL…YWFH), 186-206 (LLFA…IVSI), and 328-348 (YLTC…TSAI). In terms of domain architecture, Fatty acid hydroxylase spans 138-272 (VEFLYYWFHR…MPIYDFIYGT (135 aa)).

This sequence belongs to the sterol desaturase family. In terms of tissue distribution, expressed in flowers and siliques. Not detected in pollen, pedicels and seeds.

It localises to the membrane. This chain is Protein CER1-like 1, found in Arabidopsis thaliana (Mouse-ear cress).